Reading from the N-terminus, the 562-residue chain is Arf-GAP domain and FG repeat-containing protein 1 (562 aa).

In terms of domain architecture, Arf-GAP spans Glu11–Val135. The C4-type zinc finger occupies Cys29–Cys52. Position 167 is a phosphoserine (Ser167). The interval Ala168 to Lys194 is disordered. Residues Gly176 to Gln191 are compositionally biased toward polar residues. Position 177 is a phosphothreonine (Thr177). 2 positions are modified to phosphoserine: Ser181 and Ser362. Ser367 is a glycosylation site (O-linked (GlcNAc) serine).

In terms of assembly, interacts with EPS15R and EPS15. Interacts with FCHO1. In terms of processing, O-glycosylated.

Its subcellular location is the nucleus. The protein resides in the cytoplasmic vesicle. Required for vesicle docking or fusion during acrosome biogenesis. May play a role in RNA trafficking or localization. This Bos taurus (Bovine) protein is Arf-GAP domain and FG repeat-containing protein 1 (AGFG1).